We begin with the raw amino-acid sequence, 374 residues long: Ribosomal RNA large subunit methyltransferase G (374 aa).

The protein belongs to the methyltransferase superfamily. RlmG family.

It localises to the cytoplasm. The catalysed reaction is guanosine(1835) in 23S rRNA + S-adenosyl-L-methionine = N(2)-methylguanosine(1835) in 23S rRNA + S-adenosyl-L-homocysteine + H(+). Specifically methylates the guanine in position 1835 (m2G1835) of 23S rRNA. The sequence is that of Ribosomal RNA large subunit methyltransferase G from Pseudomonas fluorescens (strain Pf0-1).